The chain runs to 245 residues: MIAVTTPEILPLLHPLIGQLATAILSHWENYLDLSPFELPEGLGYVEGRLEGEKLIIENRCYQTPQFRKMHLELAKLGNGLDILHCVMFPRPEYPLPMFGCDIVSGKAGISAAIVDLSPTSGDKTLPSAYNQALAALPGADFAQARDLPPWGHIFSQYCLFIRPETAAEERQFLQRVTDFLTIHCKCARESQPLSGEEARIYLQGQRDYCSQQQKNDKTRRVLEKAFGWEWAERYMTGVLFDLPD.

This sequence belongs to the HY2 family.

It carries out the reaction (2R,3Z)-phycocyanobilin + 4 oxidized [2Fe-2S]-[ferredoxin] = biliverdin IXalpha + 4 reduced [2Fe-2S]-[ferredoxin] + 4 H(+). Functionally, catalyzes the four-electron reduction of biliverdin IX-alpha (2-electron reduction at both the A and D rings); the reaction proceeds via an isolatable 2-electron intermediate, 181,182-dihydrobiliverdin. This Microcystis aeruginosa (strain NIES-843 / IAM M-2473) protein is Phycocyanobilin:ferredoxin oxidoreductase.